Here is a 437-residue protein sequence, read N- to C-terminus: Purple acid phosphatase 18 (437 aa).

Residues 1 to 23 (MEKWGILLLVTLSVSIIFTSAAA) form the signal peptide. Fe cation is bound by residues aspartate 148, aspartate 175, and tyrosine 178. Aspartate 175 serves as a coordination point for Zn(2+). Residues asparagine 208 and histidine 291 each coordinate Zn(2+). Substrate is bound at residue asparagine 208. The active-site Proton donor is histidine 301. Histidine 328 serves as a coordination point for Zn(2+). Substrate is bound at residue 328-330 (HVH). Histidine 330 provides a ligand contact to Fe cation. N-linked (GlcNAc...) asparagine glycosylation is present at asparagine 390.

This sequence belongs to the metallophosphoesterase superfamily. Purple acid phosphatase family. Homodimer. It depends on Fe cation as a cofactor. Zn(2+) serves as cofactor. As to expression, expressed in roots, stems, leaves, flowers and siliques.

Its subcellular location is the secreted. It carries out the reaction a phosphate monoester + H2O = an alcohol + phosphate. This is Purple acid phosphatase 18 (PAP18) from Arabidopsis thaliana (Mouse-ear cress).